Consider the following 350-residue polypeptide: 3-dehydroquinate synthase (350 aa).

NAD(+) contacts are provided by residues 106–110 (GVIGD), 130–131 (TS), lysine 143, and lysine 152. Zn(2+)-binding residues include glutamate 185, histidine 246, and histidine 263.

This sequence belongs to the sugar phosphate cyclases superfamily. Dehydroquinate synthase family. Co(2+) is required as a cofactor. The cofactor is Zn(2+). Requires NAD(+) as cofactor.

The protein resides in the cytoplasm. It catalyses the reaction 7-phospho-2-dehydro-3-deoxy-D-arabino-heptonate = 3-dehydroquinate + phosphate. It participates in metabolic intermediate biosynthesis; chorismate biosynthesis; chorismate from D-erythrose 4-phosphate and phosphoenolpyruvate: step 2/7. Functionally, catalyzes the conversion of 3-deoxy-D-arabino-heptulosonate 7-phosphate (DAHP) to dehydroquinate (DHQ). The protein is 3-dehydroquinate synthase of Clostridium botulinum (strain Alaska E43 / Type E3).